Here is a 391-residue protein sequence, read N- to C-terminus: MSRVFKKTCSNGKLSIYLGKRDFVDHVDMVEPIDGVVLVDPEYLKGRKMFVMLTCAFRYGHDDLDVIGLTFRKDLYVQVQQVVPAEPTSPQVPLTVLQERLLHKLGDNAYPFNLQMVVNLPCSVTLQPGPDDTGKACGIDFEVKSFCAENLEEKVSKKDSVRLVIRKIQFAPVEPGPGPWAQTVRRFLLSAQPLQLQAWMDREVHYHGKPISVNVSINNSTNKVIKKIKISVDQITDVVLYSLDKYTKTVFIQEFTETIAANSTFSKSFEVTPLLADNCEKQGLALDGKLKHGDTNLASSTILRPGMDKELLGILVSYKVRVNLMVSCGGILGDLTASDVGVELPLILMHPKPSNEAASSEDIVIEEFARQEPGGREESQEALAAEGDEGS.

Residues 369–379 (ARQEPGGREES) show a composition bias toward basic and acidic residues. The tract at residues 369 to 391 (ARQEPGGREESQEALAAEGDEGS) is disordered.

This sequence belongs to the arrestin family. As to quaternary structure, homodimer; disulfide-linked in response to retinal illumination. Interacts with CXCR4; the interaction is dependent on the C-terminal phosphorylation of CXCR4 and modulates the calcium ion mobilization activity of CXCR4. Interacts with GPR84.

It is found in the photoreceptor inner segment. The protein resides in the cell projection. It localises to the cilium. Its subcellular location is the photoreceptor outer segment. In terms of biological role, may play a role in an as yet undefined retina-specific signal transduction. Could bind to photoactivated-phosphorylated red/green opsins. This chain is Arrestin-C (ARR3), found in Sus scrofa (Pig).